Reading from the N-terminus, the 1283-residue chain is Bifunctional dioxygenase (DOX)-epoxy alcohol synthase (EAS) (1283 aa).

Residues 1–64 (MAEHKNGVAT…LPKEMGDGSY (64 aa)) form a disordered region. Positions 130 to 476 (TNSFISQLWN…DGKFNDDELV (347 aa)) are fatty acid alpha-dioxygenase. Heme b is bound at residue H227. Y405 is an active-site residue. Position 408 (H408) interacts with heme b. The segment at 684–1108 (INIIGYNAAK…WDDGCGTDLF (425 aa)) is epoxy alcohol synthase. Residue C1035 coordinates heme.

In the N-terminal section; belongs to the peroxidase family. The protein in the C-terminal section; belongs to the cytochrome P450 family. As to quaternary structure, homotetramer. It depends on heme b as a cofactor. The cofactor is heme.

It catalyses the reaction (9Z,12Z)-octadecadienoate + O2 = (8E,10R,12Z)-10-hydroperoxyoctadeca-8,12-dienoate. It carries out the reaction (8E,10R,12Z)-10-hydroperoxyoctadeca-8,12-dienoate = (12S,13R)-epoxy-(10R)-hydroxy-(8E)-octadecenoate. The enzyme catalyses (9Z)-octadecenoate + O2 = (8R)-hydroperoxy-(9Z)-octadecenoate. In terms of biological role, bifunctional dioxygenase (DOX)-epoxy alcohol synthase (EAS) that converts linoleic acid (18:2n-6) sequentially to 10(R)-hydroperoxy-8(E),12(Z)-octadecadienoic acid (10R-HPODE) and 10R-HPODE further to 12(13)-epoxy-10-hydroxy-8(E)-octa-decenoic acid as the end product. Linoleic acid is oxidized mainly to the R stereoisomer of 10-HPODE. The dioxygenase domain is also able to oygenate position C-8 of linoleic acid to produce 8(R)-hydroperoxy-8(E),12(Z)-octadecadienoic acid (8R-HPODE). The polypeptide is Bifunctional dioxygenase (DOX)-epoxy alcohol synthase (EAS) (Fusarium oxysporum (strain Fo5176) (Fusarium vascular wilt)).